An 860-amino-acid polypeptide reads, in one-letter code: Ubiquitin fusion degradation protein 3 homolog (860 aa).

WD repeat units lie at residues alanine 27–threonine 65, proline 71–isoleucine 112, glutamate 115–phenylalanine 154, glycine 163–lysine 203, glycine 204–lysine 242, and alanine 244–leucine 283. A PFU domain is found at proline 397 to alanine 497. The disordered stretch occupies residues alanine 494–glycine 585. Residues proline 586 to methionine 856 enclose the PUL domain.

The protein belongs to the WD repeat PLAP family. As to quaternary structure, interacts with cdc-48.1. As to expression, expressed in intestine (at protein level).

Its subcellular location is the cytoplasm. Plays a role in protein ubiquitination, sorting and degradation through its association with cdc-48.1 and/or cdc-48.2. This Caenorhabditis elegans protein is Ubiquitin fusion degradation protein 3 homolog.